The chain runs to 927 residues: Autophagy-related protein 18h (927 aa).

Disordered regions lie at residues 1–25 (MKSNSKVNINNNGDNHNQTKNNGTN) and 333–353 (DGPGPSLSSSPGRKVGRVGSH). The segment covering 335-344 (PGPSLSSSPG) has biased composition (low complexity). 2 WD repeats span residues 379 to 419 (AHTS…TKNG) and 441 to 482 (MTSA…NVLE). Disordered regions lie at residues 750-788 (NRGFSGERDSDSSSSSDPGQVKEMHPFNGMVYPEDEERR) and 844-927 (IENS…SEEG). The span at 846–859 (NSSGISGDSNVSSN) shows a compositional bias: low complexity. Over residues 896–907 (ETEHKDAPSDGK) the composition is skewed to basic and acidic residues.

This sequence belongs to the WD repeat PROPPIN family. In terms of assembly, component of the PI(3,5)P2 regulatory complex at least composed of ATG18, SAC/FIG4, FAB1 and VAC14. Expressed in roots, flowers and leaves.

The protein resides in the preautophagosomal structure membrane. It localises to the vacuole membrane. Its function is as follows. The PI(3,5)P2 regulatory complex regulates both the synthesis and turnover of phosphatidylinositol 3,5-bisphosphate (PtdIns(3,5)P2). Required for autophagy. This Arabidopsis thaliana (Mouse-ear cress) protein is Autophagy-related protein 18h (ATG18H).